A 404-amino-acid polypeptide reads, in one-letter code: Acetate kinase (404 aa).

N8 is a binding site for Mg(2+). K15 is a binding site for ATP. R92 contacts substrate. The Proton donor/acceptor role is filled by D149. ATP-binding positions include 207–211 (HLGSG), 282–284 (DMR), and 327–331 (GIGEN). E378 is a Mg(2+) binding site.

The protein belongs to the acetokinase family. In terms of assembly, homodimer. Mg(2+) is required as a cofactor. It depends on Mn(2+) as a cofactor.

The protein localises to the cytoplasm. The catalysed reaction is acetate + ATP = acetyl phosphate + ADP. It participates in metabolic intermediate biosynthesis; acetyl-CoA biosynthesis; acetyl-CoA from acetate: step 1/2. Its function is as follows. Catalyzes the formation of acetyl phosphate from acetate and ATP. Can also catalyze the reverse reaction. This chain is Acetate kinase, found in Nitrobacter hamburgensis (strain DSM 10229 / NCIMB 13809 / X14).